The primary structure comprises 85 residues: Type 3 secretion system needle filament protein (85 aa).

A coiled-coil region spans residues 13–41; the sequence is LDTVANALKEQANAANKDVNDAIKALQGT.

The core secretion machinery of the T3SS is composed of approximately 20 different proteins, including cytoplasmic components, a base, an export apparatus and a needle. This subunit polymerizes and forms the helical needle filament. Forms a stable heterotrimeric complex with PscE and PscG in the cytoplasm, blocking it in a monomeric state and preventing its polymerization.

The protein resides in the secreted. Its subcellular location is the cell surface. In terms of biological role, component of the type III secretion system (T3SS), also called injectisome, which is used to inject bacterial effector proteins into eukaryotic host cells, facilitating the establishment and dissemination of infection. PscF/SctF forms the external needle filament that protrudes from the bacterial surface. This is Type 3 secretion system needle filament protein from Pseudomonas aeruginosa (strain ATCC 15692 / DSM 22644 / CIP 104116 / JCM 14847 / LMG 12228 / 1C / PRS 101 / PAO1).